The primary structure comprises 1395 residues: G-protein coupled receptor-associated sorting protein 1 (1395 aa).

Disordered stretches follow at residues 1–25 (MTGAEIESGAQVKPEKKPGEEVVGG), 45–83 (QIMPGARPKNKSKVMPGASTKVETSAVGGARPKSKAKAI), and 269–288 (TNTWSGPREDPNSRSRFRSK). Residues 269–281 (TNTWSGPREDPNS) are compositionally biased toward basic and acidic residues. Ser-297 carries the phosphoserine modification. The segment at 446–469 (SMGTGASSKSRPRTDGERIGDSLF) is disordered. Residues 457–469 (PRTDGERIGDSLF) show a composition bias toward basic and acidic residues. Phosphoserine occurs at positions 631 and 899. The segment at 899 to 1395 (SETEEETIFG…QNDPEGDQEN (497 aa)) is OPRD1-binding.

Belongs to the GPRASP family. As to quaternary structure, interacts with cytoplasmic tails of a variety of G-protein coupled receptors such as D2 dopamine receptor/DRD2, delta opioid receptor/OPRD1, beta-2 adrenergic receptor/ADRB2 and D4 dopamine receptor/DRD4. Interacts with PER1. Interacts with BECN2; the interaction is direct. In terms of tissue distribution, expressed in the brain, with lower expression in medulla, spinal cord and substantia nigra.

The protein localises to the cytoplasm. Functionally, modulates lysosomal sorting and functional down-regulation of a variety of G-protein coupled receptors. Targets receptors for degradation in lysosomes via its interaction with BECN2. The chain is G-protein coupled receptor-associated sorting protein 1 (GPRASP1) from Homo sapiens (Human).